A 143-amino-acid chain; its full sequence is Sirohydrochlorin cobaltochelatase (143 aa).

The active-site Proton acceptor is the His-18. His-18 is a binding site for Co(2+). His-18 lines the Ni(2+) pocket. Substrate contacts are provided by residues Arg-53 and 78–83 (LAHGVH). Residue His-83 coordinates Co(2+). His-83 contributes to the Ni(2+) binding site.

It belongs to the CbiX family. CbiXS subfamily. Homotetramer; dimer of dimers.

It catalyses the reaction Co-sirohydrochlorin + 2 H(+) = sirohydrochlorin + Co(2+). It carries out the reaction Ni-sirohydrochlorin + 2 H(+) = sirohydrochlorin + Ni(2+). It participates in cofactor biosynthesis; adenosylcobalamin biosynthesis; cob(II)yrinate a,c-diamide from sirohydrochlorin (anaerobic route): step 1/10. Functionally, catalyzes the insertion of Co(2+) into sirohydrochlorin as part of the anaerobic pathway to cobalamin biosynthesis. Involved in the biosynthesis of the unique nickel-containing tetrapyrrole coenzyme F430, the prosthetic group of methyl-coenzyme M reductase (MCR), which plays a key role in methanogenesis and anaerobic methane oxidation (Potential). Catalyzes the insertion of Ni(2+) into sirohydrochlorin to yield Ni-sirohydrochlorin (Potential). This is Sirohydrochlorin cobaltochelatase from Methanothermobacter thermautotrophicus (strain ATCC 29096 / DSM 1053 / JCM 10044 / NBRC 100330 / Delta H) (Methanobacterium thermoautotrophicum).